Consider the following 82-residue polypeptide: Cytochrome b559 subunit alpha (82 aa).

Residues 21–35 traverse the membrane as a helical segment; the sequence is VIHSITIPALFIAGW. H23 is a heme binding site.

Belongs to the PsbE/PsbF family. As to quaternary structure, heterodimer of an alpha subunit and a beta subunit. PSII is composed of 1 copy each of membrane proteins PsbA, PsbB, PsbC, PsbD, PsbE, PsbF, PsbH, PsbI, PsbJ, PsbK, PsbL, PsbM, PsbT, PsbX, PsbY, PsbZ, Psb30/Ycf12, peripheral proteins PsbO, CyanoQ (PsbQ), PsbU, PsbV and a large number of cofactors. It forms dimeric complexes. Heme b is required as a cofactor.

The protein resides in the cellular thylakoid membrane. Functionally, this b-type cytochrome is tightly associated with the reaction center of photosystem II (PSII). PSII is a light-driven water:plastoquinone oxidoreductase that uses light energy to abstract electrons from H(2)O, generating O(2) and a proton gradient subsequently used for ATP formation. It consists of a core antenna complex that captures photons, and an electron transfer chain that converts photonic excitation into a charge separation. The protein is Cytochrome b559 subunit alpha of Nostoc punctiforme (strain ATCC 29133 / PCC 73102).